Reading from the N-terminus, the 505-residue chain is Glutamate--tRNA ligase (505 aa).

A 'HIGH' region motif is present at residues 12 to 22 (PSPTGALHIGG). Residues 260–264 (KLSKR) carry the 'KMSKS' region motif. Position 263 (K263) interacts with ATP.

This sequence belongs to the class-I aminoacyl-tRNA synthetase family. Glutamate--tRNA ligase type 1 subfamily. As to quaternary structure, monomer.

The protein localises to the cytoplasm. The catalysed reaction is tRNA(Glu) + L-glutamate + ATP = L-glutamyl-tRNA(Glu) + AMP + diphosphate. In terms of biological role, catalyzes the attachment of glutamate to tRNA(Glu) in a two-step reaction: glutamate is first activated by ATP to form Glu-AMP and then transferred to the acceptor end of tRNA(Glu). This Parabacteroides distasonis (strain ATCC 8503 / DSM 20701 / CIP 104284 / JCM 5825 / NCTC 11152) protein is Glutamate--tRNA ligase.